The chain runs to 736 residues: Phosphoribosylformylglycinamidine synthase subunit PurL (736 aa).

His49 is an active-site residue. Residues Tyr52 and Lys91 each contribute to the ATP site. Residue Glu93 coordinates Mg(2+). Substrate is bound by residues 94-97 and Arg116; that span reads SHNH. Catalysis depends on His95, which acts as the Proton acceptor. Asp117 provides a ligand contact to Mg(2+). Residue Gln240 coordinates substrate. Residue Asp268 participates in Mg(2+) binding. Residue 312 to 314 participates in substrate binding; it reads ESQ. Asp493 and Gly530 together coordinate ATP. Asn531 is a binding site for Mg(2+). Ser533 is a substrate binding site.

Belongs to the FGAMS family. Monomer. Part of the FGAM synthase complex composed of 1 PurL, 1 PurQ and 2 PurS subunits.

It is found in the cytoplasm. The catalysed reaction is N(2)-formyl-N(1)-(5-phospho-beta-D-ribosyl)glycinamide + L-glutamine + ATP + H2O = 2-formamido-N(1)-(5-O-phospho-beta-D-ribosyl)acetamidine + L-glutamate + ADP + phosphate + H(+). It functions in the pathway purine metabolism; IMP biosynthesis via de novo pathway; 5-amino-1-(5-phospho-D-ribosyl)imidazole from N(2)-formyl-N(1)-(5-phospho-D-ribosyl)glycinamide: step 1/2. In terms of biological role, part of the phosphoribosylformylglycinamidine synthase complex involved in the purines biosynthetic pathway. Catalyzes the ATP-dependent conversion of formylglycinamide ribonucleotide (FGAR) and glutamine to yield formylglycinamidine ribonucleotide (FGAM) and glutamate. The FGAM synthase complex is composed of three subunits. PurQ produces an ammonia molecule by converting glutamine to glutamate. PurL transfers the ammonia molecule to FGAR to form FGAM in an ATP-dependent manner. PurS interacts with PurQ and PurL and is thought to assist in the transfer of the ammonia molecule from PurQ to PurL. The sequence is that of Phosphoribosylformylglycinamidine synthase subunit PurL from Rhodopseudomonas palustris (strain BisB5).